A 326-amino-acid polypeptide reads, in one-letter code: Phenylserine dehydratase (326 aa).

Monomer. Pyridoxal 5'-phosphate is required as a cofactor.

It carries out the reaction L-threo-3-phenylserine = 3-phenylpyruvate + NH4(+). Inhibited by phenylhydrazine, hydroxylamine, p-chloromercuribenzoate, and HgCl(2). This Ralstonia pickettii (Burkholderia pickettii) protein is Phenylserine dehydratase.